Consider the following 99-residue polypeptide: Large ribosomal subunit protein bL27 (99 aa).

The propeptide occupies 1–9; it reads MLIMNLQLF.

Belongs to the bacterial ribosomal protein bL27 family. In terms of processing, the N-terminus is cleaved by ribosomal processing cysteine protease Prp.

This chain is Large ribosomal subunit protein bL27, found in Clostridium botulinum (strain Alaska E43 / Type E3).